The chain runs to 588 residues: Intracellular maltogenic amylase (588 aa).

Ca(2+) contacts are provided by Asn-149, Ser-155, Gly-174, and Asp-176. 2 residues coordinate substrate: His-249 and Arg-325. Catalysis depends on Asp-327, which acts as the Nucleophile. Glu-356 serves as the catalytic Proton donor. Residues 422 to 423 (HD), Asp-467, and Arg-471 contribute to the substrate site.

The protein belongs to the glycosyl hydrolase 13 family. BbmA subfamily. As to quaternary structure, monomer or homodimer; in equilibrium. It depends on Ca(2+) as a cofactor.

Its subcellular location is the cytoplasm. Its function is as follows. Hydrolyzes beta-cyclodextrin to maltose and glucose, soluble starch to maltose and glucose, and pullulan to panose with trace amounts of maltose and glucose. It is also able to hydrolyze acarbose. Can also exhibit a transglycosylation activity transferring glucose or maltose to another moiety of sugars by forming alpha-(1,6)- and alpha-(1,3)-glycosidic linkages upon the hydrolysis of substrate at concentrations of 5% or higher. The sequence is that of Intracellular maltogenic amylase (bbmA) from Bacillus subtilis (strain 168).